Consider the following 396-residue polypeptide: uncharacterized protein (396 aa).

The protein belongs to the mycobacterial PPE family.

This is an uncharacterized protein from Mycobacterium tuberculosis (strain ATCC 25618 / H37Rv).